Reading from the N-terminus, the 162-residue chain is Cyclic pyranopterin monophosphate synthase (162 aa).

Residues 75-77 (LCH) and 113-114 (ME) contribute to the substrate site. The active site involves D128.

The protein belongs to the MoaC family. Homohexamer; trimer of dimers.

It catalyses the reaction (8S)-3',8-cyclo-7,8-dihydroguanosine 5'-triphosphate = cyclic pyranopterin phosphate + diphosphate. The protein operates within cofactor biosynthesis; molybdopterin biosynthesis. Its function is as follows. Catalyzes the conversion of (8S)-3',8-cyclo-7,8-dihydroguanosine 5'-triphosphate to cyclic pyranopterin monophosphate (cPMP). The polypeptide is Cyclic pyranopterin monophosphate synthase (Burkholderia ambifaria (strain MC40-6)).